A 213-amino-acid polypeptide reads, in one-letter code: MFTIKEEIANAITHGIGVLLSIPALVFLIIFAANYGSAWDIVSFTIFGVSMLLLYLSSTLLHSITHKKTKDILEIIDHSAIYVLIAGTYTPFLLGPLKGTLGFTLLVIVWSLALGGIVFKIFFVKRFILLSTFVYLVMGWLMIIAVKPLYASLSGAGFSLLFLGGILYSVGTIFYIWKKIPFHHAIWHSFVLGGSAAMFFCVLFYCVKVPFLS.

A run of 7 helical transmembrane segments spans residues 11 to 31 (AITH…LIIF), 41 to 61 (IVSF…STLL), 75 to 95 (IIDH…FLLG), 103 to 123 (FTLL…KIFF), 127 to 147 (FILL…IAVK), 157 to 177 (GFSL…FYIW), and 185 to 205 (AIWH…VLFY).

Belongs to the UPF0073 (Hly-III) family.

Its subcellular location is the cell membrane. This chain is Hemolysin-3 homolog (yplQ), found in Bacillus subtilis (strain 168).